Reading from the N-terminus, the 404-residue chain is Caspase b (404 aa).

A propeptide spanning residues 1-171 (MEDITQLLSD…DIYTPRSGTQ (171 aa)) is cleaved from the precursor. Residues 8–80 (LSDVLEDLVE…LRKIKQNERA (73 aa)) form the Pyrin domain. Catalysis depends on residues His249 and Cys296. A propeptide spanning residues 301–316 (SSGVLAQDSVFASDSW) is cleaved from the precursor.

This sequence belongs to the peptidase C14A family. Upon direct LPS-binding, forms large homooligomers, resulting in its activation. These oligomers are often referred to as 'non-canonical inflammasomes'. Heterotetramer that consists of two anti-parallel arranged heterodimers, each one formed by a 20 kDa (p20) and a 10 kDa (p10) subunit. Interacts with caspa. Interacts with pycard; the interaction only occurs in the presence of nlrp1. Component of NLRP1 inflammasomes. Inflammasomes are supramolecular complexes that assemble in the cytosol in response to pathogens and other damage-associated signals and play critical roles in innate immunity and inflammation. The NLRP1 inflammasome is composed of the signal sensor nlrp1, and the adapter pycard (asc), which recruit effector pro-inflammatory caspases caspa and/or caspb. The interaction between nlrp1 and pycard is required for the sequential recruitment of caspa and then caspb. Caspa is preferentially recruited first and this causes the cleavage of pro-il1b into the midformed il1b. This is followed by the recruitment of caspb, which is activated and cleaves the midformed il1b resulting in il1b maturation. In terms of processing, the two subunits are derived from the precursor sequence by an autocatalytic mechanism. Expressed in the spleen, kidney and liver, and highly expressed in the gills and gut.

It is found in the inflammasome. It localises to the cytoplasm. The catalysed reaction is Strict requirement for Asp at the P1 position. It has a preferred cleavage sequence of Tyr-Val-Ala-Asp-|- but also cleaves at Asp-Glu-Val-Asp-|-.. Activated by homooligomerization induced by direct binding to cytosolic LPS. Functionally, thiol protease which cleaves IL-1 beta (il1b), releasing the mature cytokine which is involved in a variety of inflammatory processes, and mediates apoptosis. Component of the NLRP1 inflammasome, which plays a crucial role in innate immunity and inflammation. In response to pathogens and other damage-associated signals, recruited to the NLRP1 inflammasome in its precursor form following the recruitment of caspase caspa. Its subsequent activation causes the cleavage of the midformed pro-il1b and results in il1b maturation and secretion in the extracellular milieu. Activated by direct binding to bacterial lipopolysaccharides (LPS), which causes non-canonical inflammasome activation and results in the pyroptosis of infected cells and their extrusion into the gut lumen, as well as in cytokine secretion. Plays a crucial role in the restriction of bacterial infection to intestinal sites. Pyroptosis limits bacterial replication, while cytokine secretion promotes the recruitment and activation of immune cells and triggers mucosal inflammation. Promotes pyroptosis by bacterial infection by E.piscicida. The sequence is that of Caspase b from Danio rerio (Zebrafish).